Reading from the N-terminus, the 153-residue chain is Peptide methionine sulfoxide reductase MsrA (153 aa).

The active site involves C10.

Belongs to the MsrA Met sulfoxide reductase family.

It catalyses the reaction L-methionyl-[protein] + [thioredoxin]-disulfide + H2O = L-methionyl-(S)-S-oxide-[protein] + [thioredoxin]-dithiol. It carries out the reaction [thioredoxin]-disulfide + L-methionine + H2O = L-methionine (S)-S-oxide + [thioredoxin]-dithiol. Has an important function as a repair enzyme for proteins that have been inactivated by oxidation. Catalyzes the reversible oxidation-reduction of methionine sulfoxide in proteins to methionine. This chain is Peptide methionine sulfoxide reductase MsrA, found in Methanococcoides burtonii (strain DSM 6242 / NBRC 107633 / OCM 468 / ACE-M).